Reading from the N-terminus, the 171-residue chain is 3-hydroxydecanoyl-[acyl-carrier-protein] dehydratase (171 aa).

The active site involves H70.

This sequence belongs to the thioester dehydratase family. FabA subfamily. In terms of assembly, homodimer.

Its subcellular location is the cytoplasm. The enzyme catalyses a (3R)-hydroxyacyl-[ACP] = a (2E)-enoyl-[ACP] + H2O. It catalyses the reaction (3R)-hydroxydecanoyl-[ACP] = (2E)-decenoyl-[ACP] + H2O. It carries out the reaction (2E)-decenoyl-[ACP] = (3Z)-decenoyl-[ACP]. It participates in lipid metabolism; fatty acid biosynthesis. Its function is as follows. Necessary for the introduction of cis unsaturation into fatty acids. Catalyzes the dehydration of (3R)-3-hydroxydecanoyl-ACP to E-(2)-decenoyl-ACP and then its isomerization to Z-(3)-decenoyl-ACP. Can catalyze the dehydratase reaction for beta-hydroxyacyl-ACPs with saturated chain lengths up to 16:0, being most active on intermediate chain length. The sequence is that of 3-hydroxydecanoyl-[acyl-carrier-protein] dehydratase from Marinomonas sp. (strain MWYL1).